The sequence spans 407 residues: Na(+)-translocating NADH-quinone reductase subunit F (407 aa).

A helical membrane pass occupies residues 3 to 23 (IILGVVMFTLIVLALTVMILF). The 2Fe-2S ferredoxin-type domain maps to 32–126 (GDITVEINED…NLKIELPEEI (95 aa)). 4 residues coordinate [2Fe-2S] cluster: C69, C75, C78, and C110. The FAD-binding FR-type domain maps to 129-269 (VKKWTCEVIS…SGPFGEFFAK (141 aa)).

This sequence belongs to the NqrF family. As to quaternary structure, composed of six subunits; NqrA, NqrB, NqrC, NqrD, NqrE and NqrF. [2Fe-2S] cluster is required as a cofactor. It depends on FAD as a cofactor.

The protein localises to the cell inner membrane. It carries out the reaction a ubiquinone + n Na(+)(in) + NADH + H(+) = a ubiquinol + n Na(+)(out) + NAD(+). Functionally, NQR complex catalyzes the reduction of ubiquinone-1 to ubiquinol by two successive reactions, coupled with the transport of Na(+) ions from the cytoplasm to the periplasm. The first step is catalyzed by NqrF, which accepts electrons from NADH and reduces ubiquinone-1 to ubisemiquinone by a one-electron transfer pathway. The polypeptide is Na(+)-translocating NADH-quinone reductase subunit F (Yersinia pseudotuberculosis serotype O:1b (strain IP 31758)).